Consider the following 448-residue polypeptide: Phosphoglucosamine mutase (448 aa).

Ser-100 (phosphoserine intermediate) is an active-site residue. 4 residues coordinate Mg(2+): Ser-100, Asp-240, Asp-242, and Asp-244. Residue Ser-100 is modified to Phosphoserine.

The protein belongs to the phosphohexose mutase family. It depends on Mg(2+) as a cofactor. In terms of processing, activated by phosphorylation.

It catalyses the reaction alpha-D-glucosamine 1-phosphate = D-glucosamine 6-phosphate. Functionally, catalyzes the conversion of glucosamine-6-phosphate to glucosamine-1-phosphate. The polypeptide is Phosphoglucosamine mutase (Clostridium acetobutylicum (strain ATCC 824 / DSM 792 / JCM 1419 / IAM 19013 / LMG 5710 / NBRC 13948 / NRRL B-527 / VKM B-1787 / 2291 / W)).